Here is a 284-residue protein sequence, read N- to C-terminus: Pantothenate synthetase (284 aa).

30–37 (MGNLHDGH) provides a ligand contact to ATP. Catalysis depends on His37, which acts as the Proton donor. Residue Gln61 coordinates (R)-pantoate. Gln61 is a binding site for beta-alanine. 149-152 (GEKD) is an ATP binding site. Residue Gln155 participates in (R)-pantoate binding. ATP-binding positions include Val178 and 186 to 189 (LSSR).

This sequence belongs to the pantothenate synthetase family. Homodimer.

It is found in the cytoplasm. The catalysed reaction is (R)-pantoate + beta-alanine + ATP = (R)-pantothenate + AMP + diphosphate + H(+). Its pathway is cofactor biosynthesis; (R)-pantothenate biosynthesis; (R)-pantothenate from (R)-pantoate and beta-alanine: step 1/1. In terms of biological role, catalyzes the condensation of pantoate with beta-alanine in an ATP-dependent reaction via a pantoyl-adenylate intermediate. This is Pantothenate synthetase from Klebsiella pneumoniae subsp. pneumoniae (strain ATCC 700721 / MGH 78578).